The sequence spans 189 residues: MRKIGIIGGTFDPPHYGHLLIANEVYHALNLEEVWFLPNQIPPHKQGRNITSVESRLQMLELATEEEEHFSICLEELSRKGPSYTYDTMLQLTKKHPDVQFHFIIGGDMVEYLPKWYNIEMLLNLVTFVGVARPGYTLHTPYPITTVEIPEFAVSSSLLRERYKEKKTCKYLLPEKVQVYIERNGLYES.

This sequence belongs to the NadD family.

The enzyme catalyses nicotinate beta-D-ribonucleotide + ATP + H(+) = deamido-NAD(+) + diphosphate. The protein operates within cofactor biosynthesis; NAD(+) biosynthesis; deamido-NAD(+) from nicotinate D-ribonucleotide: step 1/1. Catalyzes the reversible adenylation of nicotinate mononucleotide (NaMN) to nicotinic acid adenine dinucleotide (NaAD). The protein is Probable nicotinate-nucleotide adenylyltransferase of Bacillus cereus (strain ATCC 10987 / NRS 248).